The following is a 165-amino-acid chain: Putative 4-hydroxy-4-methyl-2-oxoglutarate aldolase (165 aa).

Substrate contacts are provided by residues 80-83 (GGNL) and Arg-102. Asp-103 provides a ligand contact to a divalent metal cation.

The protein belongs to the class II aldolase/RraA-like family. As to quaternary structure, homotrimer. Requires a divalent metal cation as cofactor.

It carries out the reaction 4-hydroxy-4-methyl-2-oxoglutarate = 2 pyruvate. The catalysed reaction is oxaloacetate + H(+) = pyruvate + CO2. Functionally, catalyzes the aldol cleavage of 4-hydroxy-4-methyl-2-oxoglutarate (HMG) into 2 molecules of pyruvate. Also contains a secondary oxaloacetate (OAA) decarboxylase activity due to the common pyruvate enolate transition state formed following C-C bond cleavage in the retro-aldol and decarboxylation reactions. This is Putative 4-hydroxy-4-methyl-2-oxoglutarate aldolase from Cupriavidus necator (strain ATCC 17699 / DSM 428 / KCTC 22496 / NCIMB 10442 / H16 / Stanier 337) (Ralstonia eutropha).